An 808-amino-acid chain; its full sequence is ATP-dependent 6-phosphofructokinase (808 aa).

Residues 1–21 form a disordered region; that stretch reads MSSTQAPVEPPKRRRIGVLTS. Residues 1–389 form an N-terminal catalytic PFK domain 1 region; that stretch reads MSSTQAPVEP…YHFAYRNTAT (389 aa). ATP is bound by residues Gly23, 86-87, and 116-119; these read RS and GDGS. Asp117 provides a ligand contact to Mg(2+). Substrate contacts are provided by residues 162-164, Arg199, 206-208, Glu263, Arg291, and 297-300; these read SID, MGR, and HTQR. Asp164 (proton acceptor) is an active-site residue. Residues 390 to 403 form an interdomain linker region; the sequence is PDHPKMILPQDKRM. Residues 404–808 are C-terminal regulatory PFK domain 2; that stretch reads RIAIIHVGAP…DIDPSALTSS (405 aa). Residues Arg480, 537–541, Arg575, 582–584, Glu642, Arg668, 674–677, and Arg749 each bind beta-D-fructose 2,6-bisphosphate; these read TISNN, QGG, and HFQQ.

Belongs to the phosphofructokinase type A (PFKA) family. ATP-dependent PFK group I subfamily. Eukaryotic two domain clade 'E' sub-subfamily. As to quaternary structure, homotetramer. Mg(2+) serves as cofactor.

Its subcellular location is the cytoplasm. It catalyses the reaction beta-D-fructose 6-phosphate + ATP = beta-D-fructose 1,6-bisphosphate + ADP + H(+). The protein operates within carbohydrate degradation; glycolysis; D-glyceraldehyde 3-phosphate and glycerone phosphate from D-glucose: step 3/4. With respect to regulation, allosterically activated by ADP, AMP, or fructose 2,6-bisphosphate, and allosterically inhibited by ATP or citrate. Catalyzes the phosphorylation of D-fructose 6-phosphate to fructose 1,6-bisphosphate by ATP, the first committing step of glycolysis. In Aspergillus fumigatus (strain ATCC MYA-4609 / CBS 101355 / FGSC A1100 / Af293) (Neosartorya fumigata), this protein is ATP-dependent 6-phosphofructokinase (pfkA).